The primary structure comprises 56 residues: Potassium channel toxin alpha-KTx 9.2 (56 aa).

The N-terminal stretch at 1 to 28 (MSRLFTLVLIVLAMNVMMAIISDPVVEA) is a signal peptide. 3 cysteine pairs are disulfide-bonded: C31–C47, C34–C52, and C38–C54.

In terms of tissue distribution, expressed by the venom gland.

The protein resides in the secreted. Its function is as follows. Blocks small conductance calcium-activated potassium channels (KCNN, SK). Low toxicity by intracerebroventricular injection into mice. This is Potassium channel toxin alpha-KTx 9.2 from Olivierus martensii (Manchurian scorpion).